Reading from the N-terminus, the 296-residue chain is Fructose-bisphosphate aldolase class 1 (296 aa).

The active-site Proton acceptor is the glutamate 175. The Schiff-base intermediate with dihydroxyacetone-P role is filled by lysine 212.

Belongs to the class I fructose-bisphosphate aldolase family.

It catalyses the reaction beta-D-fructose 1,6-bisphosphate = D-glyceraldehyde 3-phosphate + dihydroxyacetone phosphate. It participates in carbohydrate degradation; glycolysis; D-glyceraldehyde 3-phosphate and glycerone phosphate from D-glucose: step 4/4. This chain is Fructose-bisphosphate aldolase class 1, found in Staphylococcus haemolyticus (strain JCSC1435).